Here is a 192-residue protein sequence, read N- to C-terminus: Small ribosomal subunit protein eS7 (192 aa).

Belongs to the eukaryotic ribosomal protein eS7 family.

This is Small ribosomal subunit protein eS7 (RPS7) from Secale cereale (Rye).